The primary structure comprises 386 residues: Protein U3 (386 aa).

In Human herpesvirus 6B (strain Z29) (HHV-6 variant B), this protein is Protein U3 (U3).